The following is a 1371-amino-acid chain: MNCQRYFCFVNGIVEIRTAPEEYQNKPVLVGSQSDGLLIIDNHADIEDGIFSTLHIGNGYNGAVDVINGAALHMDNRSGSAPLIVGAFGNDIAGKLNISGRNSIVSYRDTPSSSGHNESIYVGFGPGATGWINIFNGGVFEVLNSTNIYVGSDTPGGGDGSIVIDGSNSKMTADFSEAYVGLYGNGDISLKNGGQLSASNLYIGGNGRAIVNISGTDSRLIANMITISGSSGAPGIYIADQGILNVDNYINITTANDTKGKLFINSDMPGTIESKGILFGVGKAELIFKHNSDNYAFSSPLISKNTGNGIINAESGETHLTGDNTDYSGLLNILPTASIDISSQKNIGKSVIVNNGVLQITSQDDWTFNNNMTGNGYLNVHTGGHNFAFQNSTNTQEFTGTLALSDTLFDLSDDNTTALTSALVLAGVGSVITAGTGTQVINGFSFDGGAVNFGAVTQGAQQTESQIQVTDNLYINGNGAVRVSTPTDVNGIPQVINSSLSLLEQDDSNATIKLVDASSAVVKGNGGNLQLQDASGQVISSGKQRNIVQQGKNVAKGVYDYRLTSGPHNDGLYIGYALTQLDLLASGVDALVLDAAGTTGNAADMSARITGAGDLAFNSQKGETVSLSNQDNDYTGVTAIRGGNVLMNSNSVLGQTSEIRLATDTRLDMNGHSQTVGKLNGAAGSVLNINGGNLTLTDDGVSAGTLTGGGFLNISGGVLDITGGNHTFAVSTIIAKDATVRMNDVSGLGTGNISNAGTLSLTHASGLLSNNLSGSGTVSLINSDTQISGNNSNYSGLFVVDTSSQLTATGAQNLGIASVSNRGILQLNNTTDWQLINNVTGTGNVRKTGSGSLTVRSNAAWSGQTDIDDGSLILGQSDAPVMLASSLVNIAKNGKLTGFGGVVGNVTNSGSLDLRSAAPGNILTIGGNYTGNNGTLLINTVLDDSSSATDKLVIKGDASGKTRVAVTNVGGSGANTLNSIEVIHVDGNAANAEFIQAGRIAAGAYDYTLGRGPGSNYGNWYLSSSKNTPEPRPDPEPTPEGHDNNLRPEASSYTANIAAANTMFVTRLHERLGQTQYVDAITGEPKATSMWMRHEGGHNRWRDGSGQLKTQSNRYVIQLGGDIAQWDWGGTNRWHLGVMAGYGNNHSSTGAVRTGYHSKGSVNGYSTGLYATWYADDETHNGAYLDTWAQYGWFDNHVKGDGLPGESWKSKGLTASLETGYAWKIGEFSSNYGNLNEWYVQPQAQLVWMGVKADELYESNGTLIESTGDGNVHTRLGVKTWIKRLNKMDDGKSREFSPFVEVNWLHNTRDFGVRMNGEPVYQDGTRNIGEVKTGVEGQINPHLNLWGNVRVQVGDKGYNDTSAMLGVKYTF.

The interval 1020–1048 is disordered; that stretch reads WYLSSSKNTPEPRPDPEPTPEGHDNNLRP. Over residues 1029 to 1046 the composition is skewed to basic and acidic residues; it reads PEPRPDPEPTPEGHDNNL. Residues 1083-1371 form the Autotransporter domain; the sequence is GEPKATSMWM…SAMLGVKYTF (289 aa).

Its subcellular location is the cell outer membrane. This is an uncharacterized protein from Escherichia coli (strain K12).